A 215-amino-acid polypeptide reads, in one-letter code: Pyrrolidone-carboxylate peptidase (215 aa).

Active-site residues include Glu-78, Cys-141, and His-165.

The protein belongs to the peptidase C15 family. Homotetramer.

It is found in the cytoplasm. The enzyme catalyses Release of an N-terminal pyroglutamyl group from a polypeptide, the second amino acid generally not being Pro.. In terms of biological role, removes 5-oxoproline from various penultimate amino acid residues except L-proline. The sequence is that of Pyrrolidone-carboxylate peptidase from Streptococcus pyogenes serotype M3 (strain SSI-1).